The sequence spans 84 residues: MPLIEVDLLNPTAASEAKAHKMKRLVPTPNSYFLEIKCPKCGATTTTFSHAHRQILCQKCGQPLGQPTGGKLKLTQQCKFRIKK.

The C4-type zinc-finger motif lies at 38 to 60; that stretch reads CPKCGATTTTFSHAHRQILCQKC.

Belongs to the eukaryotic ribosomal protein eS27 family. As to quaternary structure, component of the small ribosomal subunit. Requires Zn(2+) as cofactor.

The protein resides in the cytoplasm. Functionally, component of the small ribosomal subunit. The ribosome is a large ribonucleoprotein complex responsible for the synthesis of proteins in the cell. Required for proper rRNA processing and maturation of 18S rRNAs. This chain is Small ribosomal subunit protein eS27 (RPS27), found in Entamoeba histolytica (strain ATCC 30459 / HM-1:IMSS / ABRM).